The primary structure comprises 306 residues: Putative syntaxin-3 (306 aa).

Over 1–279 (MPRDRLKELQ…QKRARKMKVC (279 aa)) the chain is Cytoplasmic. The tract at residues 40-180 (QDADFEMFLE…QLSDEEIENA (141 aa)) is required for the regulation of the defecation motor program. Residues 204–266 (YDEVKSRADE…KQARGNVEEA (63 aa)) form the t-SNARE coiled-coil homology domain. A helical; Anchor for type IV membrane protein transmembrane segment spans residues 280–300 (IIIGSIIAVLILILFIQSAVC). Over 301-306 (HFTPIC) the chain is Extracellular.

It belongs to the syntaxin family. Expressed in body wall, pharyngeal, vulval and enteric muscles and in some head neurons.

The protein localises to the cell membrane. Its function is as follows. Potentially involved in docking of synaptic vesicles at presynaptic active zones. Acts in the intestine to regulate anterior body muscle contractions (aBOC) and the expulsion steps during the defecation motor program (DMP). This is Putative syntaxin-3 from Caenorhabditis elegans.